We begin with the raw amino-acid sequence, 343 residues long: Heat-inducible transcription repressor HrcA (343 aa).

It belongs to the HrcA family.

In terms of biological role, negative regulator of class I heat shock genes (grpE-dnaK-dnaJ and groELS operons). Prevents heat-shock induction of these operons. The protein is Heat-inducible transcription repressor HrcA of Halalkalibacterium halodurans (strain ATCC BAA-125 / DSM 18197 / FERM 7344 / JCM 9153 / C-125) (Bacillus halodurans).